Reading from the N-terminus, the 333-residue chain is DNA-directed RNA polymerase subunit alpha (333 aa).

The interval 1-227 is alpha N-terminal domain (alpha-NTD); sequence MRKIKVAPFM…VMNKQLSVFN (227 aa). Residues 247–333 are alpha C-terminal domain (alpha-CTD); the sequence is ELKPFLAAVD…LVKKLEQLKA (87 aa).

It belongs to the RNA polymerase alpha chain family. In terms of assembly, homodimer. The RNAP catalytic core consists of 2 alpha, 1 beta, 1 beta' and 1 omega subunit. When a sigma factor is associated with the core the holoenzyme is formed, which can initiate transcription.

It carries out the reaction RNA(n) + a ribonucleoside 5'-triphosphate = RNA(n+1) + diphosphate. DNA-dependent RNA polymerase catalyzes the transcription of DNA into RNA using the four ribonucleoside triphosphates as substrates. The protein is DNA-directed RNA polymerase subunit alpha of Sulfurovum sp. (strain NBC37-1).